The chain runs to 156 residues: Large ribosomal subunit protein uL15 (156 aa).

A compositionally biased stretch (basic residues) spans 1–16 (MVRRFKRGTKYRRGSR). A disordered region spans residues 1 to 37 (MVRRFKRGTKYRRGSRTHGWGRVGQHRKSGGSGGKGM).

Belongs to the universal ribosomal protein uL15 family. In terms of assembly, part of the 50S ribosomal subunit.

In terms of biological role, binds to the 23S rRNA. This chain is Large ribosomal subunit protein uL15, found in Pyrobaculum aerophilum (strain ATCC 51768 / DSM 7523 / JCM 9630 / CIP 104966 / NBRC 100827 / IM2).